Consider the following 327-residue polypeptide: Probable 6-phosphogluconolactonase 3, chloroplastic (327 aa).

Low complexity-rich tracts occupy residues 1–29 (MSASAAVSSTCAAASSTTSRRSSSSPASR) and 43–66 (VASRTSPRSPVVPPVYATASPGGA). The interval 1–66 (MSASAAVSST…VYATASPGGA (66 aa)) is disordered. The transit peptide at 1–71 (MSASAAVSST…SPGGAGGTTA (71 aa)) directs the protein to the chloroplast.

The protein belongs to the glucosamine/galactosamine-6-phosphate isomerase family. 6-phosphogluconolactonase subfamily.

It localises to the plastid. It is found in the chloroplast. It carries out the reaction 6-phospho-D-glucono-1,5-lactone + H2O = 6-phospho-D-gluconate + H(+). Its pathway is carbohydrate degradation; pentose phosphate pathway; D-ribulose 5-phosphate from D-glucose 6-phosphate (oxidative stage): step 2/3. Hydrolysis of 6-phosphogluconolactone to 6-phosphogluconate. The sequence is that of Probable 6-phosphogluconolactonase 3, chloroplastic from Oryza sativa subsp. indica (Rice).